Here is a 292-residue protein sequence, read N- to C-terminus: Phosphoribosylglycinamide formyltransferase, chloroplastic (292 aa).

The N-terminal 65 residues, 1-65 (MESRVLFSSQ…KAASSTPQIV (65 aa)), are a transit peptide targeting the chloroplast. Residue 88 to 90 (GSN) coordinates N(1)-(5-phospho-beta-D-ribosyl)glycinamide. Residues 167–170 (LKLI) and N184 each bind (6R)-10-formyltetrahydrofolate. Residue H186 is the Proton donor of the active site. Position 227 (D227) interacts with (6R)-10-formyltetrahydrofolate. E256 is a N(1)-(5-phospho-beta-D-ribosyl)glycinamide binding site.

It belongs to the GART family.

Its subcellular location is the plastid. It localises to the chloroplast. The enzyme catalyses N(1)-(5-phospho-beta-D-ribosyl)glycinamide + (6R)-10-formyltetrahydrofolate = N(2)-formyl-N(1)-(5-phospho-beta-D-ribosyl)glycinamide + (6S)-5,6,7,8-tetrahydrofolate + H(+). It participates in purine metabolism; IMP biosynthesis via de novo pathway; N(2)-formyl-N(1)-(5-phospho-D-ribosyl)glycinamide from N(1)-(5-phospho-D-ribosyl)glycinamide (10-formyl THF route): step 1/1. This Arabidopsis thaliana (Mouse-ear cress) protein is Phosphoribosylglycinamide formyltransferase, chloroplastic (PUR3).